Here is a 354-residue protein sequence, read N- to C-terminus: D-alanine--D-alanine ligase (354 aa).

The ATP-grasp domain occupies 132 to 342; sequence KMVFERAGLP…FPSLVDRLLQ (211 aa). 168–223 contributes to the ATP binding site; sequence EAQVGYPCFVKPANLGSSVGIAKVRNRSELEAALDNAASYDRRIIVEAGLTDIREV. Mg(2+)-binding residues include Asp295, Glu309, and Asn311.

Belongs to the D-alanine--D-alanine ligase family. Mg(2+) serves as cofactor. Mn(2+) is required as a cofactor.

Its subcellular location is the cytoplasm. It carries out the reaction 2 D-alanine + ATP = D-alanyl-D-alanine + ADP + phosphate + H(+). It participates in cell wall biogenesis; peptidoglycan biosynthesis. Its function is as follows. Cell wall formation. The polypeptide is D-alanine--D-alanine ligase (Synechocystis sp. (strain ATCC 27184 / PCC 6803 / Kazusa)).